A 141-amino-acid chain; its full sequence is MQLTSFTDYGLRALIYMASLPEGLMTSISEVTDVYGVSRNHMVKIINQLSRAGYVTAVRGKNGGIRLGKPASAIRIGDVVRELEPLSLVNCSSEFCHITPACRLKQALSKAVQSFLTELDNYTLADLVEENQPLYKLLLVE.

The 128-residue stretch at 2–129 (QLTSFTDYGL…DNYTLADLVE (128 aa)) folds into the HTH rrf2-type domain. The segment at residues 28-51 (ISEVTDVYGVSRNHMVKIINQLSR) is a DNA-binding region (H-T-H motif). [2Fe-2S] cluster contacts are provided by Cys-91, Cys-96, and Cys-102.

The cofactor is [2Fe-2S] cluster.

Functionally, nitric oxide-sensitive repressor of genes involved in protecting the cell against nitrosative stress. May require iron for activity. The chain is HTH-type transcriptional repressor NsrR from Escherichia coli O157:H7 (strain EC4115 / EHEC).